A 227-amino-acid polypeptide reads, in one-letter code: MAETKTLAAAARHGTGKGAARSVRREGRIPGVIYGGGDPAEPITLDYRELNKLIYAGHFLTTLFEIDVAGTKQRVIPRDYQLDPIKDLPLHVDFLRLKPGASLKVEVPVHFLNQETCPGVKKGGSVNIVRHSIELRVPADDIPEAITADLGELEINDSLHLTALALPQGCRPTQRERDFTIVTITPPLVVAETPVAAAAAAAAPKGKAGAKAAPAAAAAPAAPAKKK.

The tract at residues 1-22 is disordered; that stretch reads MAETKTLAAAARHGTGKGAARS.

The protein belongs to the bacterial ribosomal protein bL25 family. CTC subfamily. In terms of assembly, part of the 50S ribosomal subunit; part of the 5S rRNA/L5/L18/L25 subcomplex. Contacts the 5S rRNA. Binds to the 5S rRNA independently of L5 and L18.

In terms of biological role, this is one of the proteins that binds to the 5S RNA in the ribosome where it forms part of the central protuberance. The sequence is that of Large ribosomal subunit protein bL25 from Methylocella silvestris (strain DSM 15510 / CIP 108128 / LMG 27833 / NCIMB 13906 / BL2).